We begin with the raw amino-acid sequence, 154 residues long: Myoglobin (154 aa).

The Globin domain maps to 2–148; it reads GLSDGEWQSV…FRNDIAAKYK (147 aa). Residue Ser4 is modified to Phosphoserine. His65 serves as a coordination point for nitrite. An O2-binding site is contributed by His65. A Phosphothreonine modification is found at Thr68. Heme b is bound at residue His94.

This sequence belongs to the globin family. Monomeric.

Its subcellular location is the cytoplasm. It is found in the sarcoplasm. The enzyme catalyses Fe(III)-heme b-[protein] + nitric oxide + H2O = Fe(II)-heme b-[protein] + nitrite + 2 H(+). It carries out the reaction H2O2 + AH2 = A + 2 H2O. Functionally, monomeric heme protein which primary function is to store oxygen and facilitate its diffusion within muscle tissues. Reversibly binds oxygen through a pentacoordinated heme iron and enables its timely and efficient release as needed during periods of heightened demand. Depending on the oxidative conditions of tissues and cells, and in addition to its ability to bind oxygen, it also has a nitrite reductase activity whereby it regulates the production of bioactive nitric oxide. Under stress conditions, like hypoxia and anoxia, it also protects cells against reactive oxygen species thanks to its pseudoperoxidase activity. This chain is Myoglobin (MB), found in Perodicticus potto edwarsi (Potto).